Consider the following 640-residue polypeptide: 1-deoxy-D-xylulose-5-phosphate synthase (640 aa).

Thiamine diphosphate contacts are provided by residues His-79 and 120 to 122 (GHS). Residue Asp-151 participates in Mg(2+) binding. Thiamine diphosphate contacts are provided by residues 152-153 (GG), Asn-180, Tyr-288, and Glu-372. Asn-180 serves as a coordination point for Mg(2+).

Belongs to the transketolase family. DXPS subfamily. As to quaternary structure, homodimer. Mg(2+) is required as a cofactor. Requires thiamine diphosphate as cofactor.

It carries out the reaction D-glyceraldehyde 3-phosphate + pyruvate + H(+) = 1-deoxy-D-xylulose 5-phosphate + CO2. It participates in metabolic intermediate biosynthesis; 1-deoxy-D-xylulose 5-phosphate biosynthesis; 1-deoxy-D-xylulose 5-phosphate from D-glyceraldehyde 3-phosphate and pyruvate: step 1/1. Catalyzes the acyloin condensation reaction between C atoms 2 and 3 of pyruvate and glyceraldehyde 3-phosphate to yield 1-deoxy-D-xylulose-5-phosphate (DXP). The polypeptide is 1-deoxy-D-xylulose-5-phosphate synthase (Nitrosococcus oceani (strain ATCC 19707 / BCRC 17464 / JCM 30415 / NCIMB 11848 / C-107)).